A 678-amino-acid polypeptide reads, in one-letter code: RAS guanyl-releasing protein 4 (678 aa).

2 stretches are compositionally biased toward basic residues: residues 1 to 10 (MNRKDIKRKS) and 20 to 32 (GHGRPRQARRHKT). 2 disordered regions span residues 1–33 (MNRKDIKRKSHQECSGKAGGHGRPRQARRHKTC) and 165–185 (GDASNLLSPGGPGPPPLMSSP). The N-terminal Ras-GEF domain maps to 49-175 (GVLSESSCSV…DASNLLSPGG (127 aa)). The 232-residue stretch at 201–432 (ETEELAQHLT…YELSYAREPR (232 aa)) folds into the Ras-GEF domain. The 36-residue stretch at 466–501 (HVEQLVESVFKNYDPEGHGSISLEDFEKLSANFPFA) folds into the EF-hand domain. A Phorbol-ester/DAG-type zinc finger spans residues 540–595 (LHAFQEVTFRKPTFCHSCNGFVSTGPLWGVTKRGYRCQDCGLCCHRHCRDQVRVEC). Disordered regions lie at residues 598–620 (RPETKGDPGPPGAPGPATPLPPT) and 651–678 (SSHSSWEPEMVPCPAPVLPSKASSKSSV). Pro residues predominate over residues 605–619 (PGPPGAPGPATPLPP).

This sequence belongs to the RASGRP family. In terms of tissue distribution, expressed by mast cells and their progenitors (at protein level).

It is found in the cytoplasm. It localises to the cell membrane. Functions as a cation- and diacylglycerol (DAG)-regulated nucleotide exchange factor activating Ras through the exchange of bound GDP for GTP. In neutrophils, participates in a phospholipase C-activating N-formyl peptide-activated GPCR (G protein-coupled receptor) signaling pathway by promoting Ras-mediated activation of PIK3CG/PI3Kgamma to promote neutrophil functional responses. In CD117(+) dendritic cells and mast cells, participates in an lipopolysaccharide (LPS)-activated signaling pathway that stimulates the production of interferon-gamma and other pro-inflammatory cytokines by natural killer (NK) cells. May function in mast cell differentiation. Does not appear to be required for the development of B-cells, DC-cells, T-cells, or NK-cells. This chain is RAS guanyl-releasing protein 4 (Rasgrp4), found in Rattus norvegicus (Rat).